Reading from the N-terminus, the 277-residue chain is Thiamine thiazole synthase (277 aa).

Residues Ser36, Gly63, Val126, and 152–154 each bind NAD(+); that span reads HVD. 2 residues coordinate Fe cation: Asp154 and His169. Met230 serves as a coordination point for NAD(+). Arg240 lines the glycine pocket.

The protein belongs to the THI4 family. In terms of assembly, homooctamer; tetramer of dimers. It depends on Fe(2+) as a cofactor.

The catalysed reaction is hydrogen sulfide + glycine + NAD(+) = ADP-5-ethyl-4-methylthiazole-2-carboxylate + nicotinamide + 3 H2O + H(+). It functions in the pathway cofactor biosynthesis; thiamine diphosphate biosynthesis. In terms of biological role, involved in the biosynthesis of the thiazole moiety of thiamine. Catalyzes the conversion of NAD and glycine to adenosine diphosphate 5-(2-hydroxyethyl)-4-methylthiazole-2-carboxylate (ADT), an adenylated thiazole intermediate, using free sulfide as a source of sulfur. This is Thiamine thiazole synthase from Fervidobacterium nodosum (strain ATCC 35602 / DSM 5306 / Rt17-B1).